Consider the following 397-residue polypeptide: Lysophospholipid transporter LplT (397 aa).

Over 1–17 the chain is Periplasmic; it reads MSESVHTNTSLWSKGMK. Residues 18–38 form a helical membrane-spanning segment; sequence AVIVAQFLSAFGDNALLFATL. Over 39–52 the chain is Cytoplasmic; it reads ALLKAQFYPEWSQP. The helical transmembrane segment at 53–73 threads the bilayer; the sequence is ILQMVFVGAYILFAPFVGQVA. At 74–90 the chain is on the periplasmic side; the sequence is DSFAKGRVMMFANGLKL. A helical membrane pass occupies residues 91–111; the sequence is LGAASICFGINPFLGYTLVGV. The Cytoplasmic portion of the chain corresponds to 112 to 144; that stretch reads GAAAYSPAKYGILGELTTGSKLVKANGLMEAST. Residues 145 to 165 traverse the membrane as a helical segment; sequence IAAILLGSVAGGVLADWHVLV. Position 166 (alanine 166) is a topological domain, periplasmic. The helical transmembrane segment at 167 to 187 threads the bilayer; that stretch reads LAACALAYGGAVVANIYIPKL. Residues 188–226 are Cytoplasmic-facing; the sequence is AAARPGQSWNLINMTRSFLNACTSLWRNGETRFSLVGTS. Residues 227–247 traverse the membrane as a helical segment; that stretch reads LFWGAGVTLRFLLVLWVPVAL. Residues 248-256 lie on the Periplasmic side of the membrane; the sequence is GITDNATPT. A helical transmembrane segment spans residues 257 to 277; that stretch reads YLNAMVAIGIVVGAGAAAKLV. The Cytoplasmic segment spans residues 278–280; that stretch reads TLE. The helical transmembrane segment at 281-301 threads the bilayer; that stretch reads TMSRCMPAGILIGVVVLIFSL. Residues 302-304 lie on the Periplasmic side of the membrane; that stretch reads QHE. A helical transmembrane segment spans residues 305-325; that stretch reads LLPAYALLMLIGVMGGFFVVP. Residues 326 to 343 lie on the Cytoplasmic side of the membrane; it reads LNALLQERGKKSVGAGNA. The chain crosses the membrane as a helical span at residues 344-364; it reads IAVQNLGENSAMLLMLGIYSL. Residues 365–366 lie on the Periplasmic side of the membrane; it reads AV. Residues 367–387 form a helical membrane-spanning segment; sequence MVGIPVVPIGIGFGALFALAI. Residues 388 to 397 lie on the Cytoplasmic side of the membrane; it reads TALWIWQRRH.

The protein belongs to the major facilitator superfamily. LplT (TC 2.A.1.42) family.

Its subcellular location is the cell inner membrane. Its function is as follows. Catalyzes the facilitated diffusion of 2-acyl-glycero-3-phosphoethanolamine (2-acyl-GPE) into the cell. This is Lysophospholipid transporter LplT from Shigella sonnei (strain Ss046).